Here is a 1025-residue protein sequence, read N- to C-terminus: Multidrug resistance protein MdtC (1025 aa).

The next 12 membrane-spanning stretches (helical) occupy residues 16–36 (LLTLAIALAGILGFRLLPVAP), 333–353 (EVEQSLMIAVALVILVVFVFL), 360–380 (LIPAVAVPVSLIGTFAAMYLC), 387–407 (LSLMALTIATGFVVDDAIVVL), 431–451 (VGFTVLSMSLSLIAVFLPLLM), 459–479 (FFAEFSITLSVAILISLFVSV), 528–548 (WVLLLLLGTVALTVWLFISIP), 853–873 (LWLMLAAIAAVYIVLGILYES), 875–895 (VHPLTILSTLPSAGVGALLAL), 897–917 (LFDTPFSLIALIGILLLIGIV), 953–973 (PILMTTLAALFGALPLVLTSG), and 984–1004 (ITIAGGLIMSQLLTLYTTPVV).

It belongs to the resistance-nodulation-cell division (RND) (TC 2.A.6) family. MdtC subfamily. As to quaternary structure, part of a tripartite efflux system composed of MdtA, MdtB and MdtC. MdtC forms a heteromultimer with MdtB.

Its subcellular location is the cell inner membrane. This chain is Multidrug resistance protein MdtC, found in Pantoea ananatis (strain AJ13355).